The sequence spans 991 residues: Polyribonucleotide nucleotidyltransferase 2, mitochondrial (991 aa).

Residues 1–39 (MSSIVNRASSASLPNFLAWRALGFRTICSGRLGFAPSVP) constitute a mitochondrion transit peptide. Residues 609 to 667 (PRLATLKYSNDSLRTLIGPMGVLKRKIEVETGARLSIDNGTLTIVAKNQDVMEKAQEQV) enclose the KH domain. The region spanning 678–746 (GGVYKGTVSS…VRGNIKLSRK (69 aa)) is the S1 motif 1 domain. A disordered region spans residues 813 to 865 (EAEKSSPVNDNDKPRRAATSKPDRKPKSTASKLIATQKEEEALESIAPEETSA). A compositionally biased stretch (basic and acidic residues) spans 822-838 (DNDKPRRAATSKPDRKP). The 63-residue stretch at 925 to 987 (GTEMTATVDH…GVPVMALVDE (63 aa)) folds into the S1 motif 2 domain.

It belongs to the polyribonucleotide nucleotidyltransferase family.

Its subcellular location is the mitochondrion. It carries out the reaction RNA(n+1) + phosphate = RNA(n) + a ribonucleoside 5'-diphosphate. In terms of biological role, involved in the 3'-end maturation of mitochondrial mRNAs, rRNAs and tRNAs. Functions as a poly(A) mRNA 3'-5' degrading phosphorylase and is required for the degradation of highly expressed transcripts of non-coding regions. In Arabidopsis thaliana (Mouse-ear cress), this protein is Polyribonucleotide nucleotidyltransferase 2, mitochondrial (PNP2).